The sequence spans 101 residues: Protein Tat (101 aa).

An interaction with human CREBBP region spans residues 1-24 (MDPVDPKLEPWNHPGSQPTTPCNK). Positions 1–48 (MDPVDPKLEPWNHPGSQPTTPCNKCYCKVCCWHCQVCFLNKGLGISYG) are transactivation. Residues Cys22, Cys25, and Cys27 each coordinate Zn(2+). The cysteine-rich stretch occupies residues 22-37 (CNKCYCKVCCWHCQVC). Lys28 is modified (N6-acetyllysine; by host PCAF). The Zn(2+) site is built by Cys30, His33, Cys34, and Cys37. Positions 38–48 (FLNKGLGISYG) are core. A disordered region spans residues 48 to 101 (GRKKRRPRRGTPQGSKDHQNPVPKQPLPITSGNPTGSEKPKKEVASKTETDPLD). A Nuclear localization signal, RNA-binding (TAR), and protein transduction motif is present at residues 49–57 (RKKRRPRRG). An interaction with the host capping enzyme RNGTT region spans residues 49 to 86 (RKKRRPRRGTPQGSKDHQNPVPKQPLPITSGNPTGSEK). N6-acetyllysine; by host EP300 and GCN5L2 is present on residues Lys50 and Lys51. 2 positions are modified to asymmetric dimethylarginine; by host PRMT6: Arg52 and Arg53. Lys71 participates in a covalent cross-link: Glycyl lysine isopeptide (Lys-Gly) (interchain with G-Cter in ubiquitin). Over residues 85–101 (EKPKKEVASKTETDPLD) the composition is skewed to basic and acidic residues.

The protein belongs to the lentiviruses Tat family. Interacts with host CCNT1. Associates with the P-TEFb complex composed at least of Tat, P-TEFb (CDK9 and CCNT1), TAR RNA, RNA Pol II. Recruits the HATs CREBBP, TAF1/TFIID, EP300, PCAF and GCN5L2. Interacts with host KAT5/Tip60; this interaction targets the latter to degradation. Interacts with the host deacetylase SIRT1. Interacts with host capping enzyme RNGTT; this interaction stimulates RNGTT. Binds to host KDR, and to the host integrins ITGAV/ITGB3 and ITGA5/ITGB1. Interacts with host KPNB1/importin beta-1 without previous binding to KPNA1/importin alpha-1. Interacts with EIF2AK2. Interacts with host nucleosome assembly protein NAP1L1; this interaction may be required for the transport of Tat within the nucleus, since the two proteins interact at the nuclear rim. Interacts with host C1QBP/SF2P32; this interaction involves lysine-acetylated Tat. Interacts with the host chemokine receptors CCR2, CCR3 and CXCR4. Interacts with host DPP4/CD26; this interaction may trigger an anti-proliferative effect. Interacts with host LDLR. Interacts with the host extracellular matrix metalloproteinase MMP1. Interacts with host PRMT6; this interaction mediates Tat's methylation. Interacts with, and is ubiquitinated by MDM2/Hdm2. Interacts with host PSMC3 and HTATIP2. Interacts with STAB1; this interaction may overcome SATB1-mediated repression of IL2 and IL2RA (interleukin) in T cells by binding to the same domain than HDAC1. Interacts (when acetylated) with human CDK13, thereby increasing HIV-1 mRNA splicing and promoting the production of the doubly spliced HIV-1 protein Nef. Interacts with host TBP; this interaction modulates the activity of transcriptional pre-initiation complex. Interacts with host RELA. Interacts with host PLSCR1; this interaction negatively regulates Tat transactivation activity by altering its subcellular distribution. Asymmetrical arginine methylation by host PRMT6 seems to diminish the transactivation capacity of Tat and affects the interaction with host CCNT1. In terms of processing, acetylation by EP300, CREBBP, GCN5L2/GCN5 and PCAF regulates the transactivation activity of Tat. EP300-mediated acetylation of Lys-50 promotes dissociation of Tat from the TAR RNA through the competitive binding to PCAF's bromodomain. In addition, the non-acetylated Tat's N-terminus can also interact with PCAF. PCAF-mediated acetylation of Lys-28 enhances Tat's binding to CCNT1. Lys-50 is deacetylated by SIRT1. Post-translationally, polyubiquitination by host MDM2 does not target Tat to degradation, but activates its transactivation function and fosters interaction with CCNT1 and TAR RNA. Phosphorylated by EIF2AK2 on serine and threonine residues adjacent to the basic region important for TAR RNA binding and function. Phosphorylation of Tat by EIF2AK2 is dependent on the prior activation of EIF2AK2 by dsRNA.

It localises to the host nucleus. The protein resides in the host nucleolus. It is found in the host cytoplasm. Its subcellular location is the secreted. Functionally, transcriptional activator that increases RNA Pol II processivity, thereby increasing the level of full-length viral transcripts. Recognizes a hairpin structure at the 5'-LTR of the nascent viral mRNAs referred to as the transactivation responsive RNA element (TAR) and recruits the cyclin T1-CDK9 complex (P-TEFb complex) that will in turn hyperphosphorylate the RNA polymerase II to allow efficient elongation. The CDK9 component of P-TEFb and other Tat-activated kinases hyperphosphorylate the C-terminus of RNA Pol II that becomes stabilized and much more processive. Other factors such as HTATSF1/Tat-SF1, SUPT5H/SPT5, and HTATIP2 are also important for Tat's function. Besides its effect on RNA Pol II processivity, Tat induces chromatin remodeling of proviral genes by recruiting the histone acetyltransferases (HATs) CREBBP, EP300 and PCAF to the chromatin. This also contributes to the increase in proviral transcription rate, especially when the provirus integrates in transcriptionally silent region of the host genome. To ensure maximal activation of the LTR, Tat mediates nuclear translocation of NF-kappa-B by interacting with host RELA. Through its interaction with host TBP, Tat may also modulate transcription initiation. Tat can reactivate a latently infected cell by penetrating in it and transactivating its LTR promoter. In the cytoplasm, Tat is thought to act as a translational activator of HIV-1 mRNAs. Its function is as follows. Extracellular circulating Tat can be endocytosed by surrounding uninfected cells via the binding to several surface receptors such as CD26, CXCR4, heparan sulfate proteoglycans (HSPG) or LDLR. Neurons are rarely infected, but they internalize Tat via their LDLR. Through its interaction with nuclear HATs, Tat is potentially able to control the acetylation-dependent cellular gene expression. Modulates the expression of many cellular genes involved in cell survival, proliferation or in coding for cytokines or cytokine receptors. Tat plays a role in T-cell and neurons apoptosis. Tat induced neurotoxicity and apoptosis probably contribute to neuroAIDS. Circulating Tat also acts as a chemokine-like and/or growth factor-like molecule that binds to specific receptors on the surface of the cells, affecting many cellular pathways. In the vascular system, Tat binds to ITGAV/ITGB3 and ITGA5/ITGB1 integrins dimers at the surface of endothelial cells and competes with bFGF for heparin-binding sites, leading to an excess of soluble bFGF. In Homo sapiens (Human), this protein is Protein Tat.